The following is a 154-amino-acid chain: Transcription antitermination protein NusB (154 aa).

Belongs to the NusB family.

Involved in transcription antitermination. Required for transcription of ribosomal RNA (rRNA) genes. Binds specifically to the boxA antiterminator sequence of the ribosomal RNA (rrn) operons. The chain is Transcription antitermination protein NusB from Hyphomonas neptunium (strain ATCC 15444).